The sequence spans 466 residues: ATP synthase subunit beta (466 aa).

Residue 156-163 (GGAGVGKT) coordinates ATP.

This sequence belongs to the ATPase alpha/beta chains family. F-type ATPases have 2 components, CF(1) - the catalytic core - and CF(0) - the membrane proton channel. CF(1) has five subunits: alpha(3), beta(3), gamma(1), delta(1), epsilon(1). CF(0) has three main subunits: a(1), b(2) and c(9-12). The alpha and beta chains form an alternating ring which encloses part of the gamma chain. CF(1) is attached to CF(0) by a central stalk formed by the gamma and epsilon chains, while a peripheral stalk is formed by the delta and b chains.

It localises to the cell inner membrane. It carries out the reaction ATP + H2O + 4 H(+)(in) = ADP + phosphate + 5 H(+)(out). Functionally, produces ATP from ADP in the presence of a proton gradient across the membrane. The catalytic sites are hosted primarily by the beta subunits. This chain is ATP synthase subunit beta, found in Dechloromonas aromatica (strain RCB).